Reading from the N-terminus, the 238-residue chain is 7-cyano-7-deazaguanine synthase (238 aa).

Position 14–24 (14–24) interacts with ATP; sequence FSGGQDSTTCL. Zn(2+) is bound by residues C195, C204, C207, and C210.

It belongs to the QueC family. Requires Zn(2+) as cofactor.

The catalysed reaction is 7-carboxy-7-deazaguanine + NH4(+) + ATP = 7-cyano-7-deazaguanine + ADP + phosphate + H2O + H(+). It functions in the pathway purine metabolism; 7-cyano-7-deazaguanine biosynthesis. Functionally, catalyzes the ATP-dependent conversion of 7-carboxy-7-deazaguanine (CDG) to 7-cyano-7-deazaguanine (preQ(0)). The sequence is that of 7-cyano-7-deazaguanine synthase from Baumannia cicadellinicola subsp. Homalodisca coagulata.